Reading from the N-terminus, the 4650-residue chain is Nonribosomal peptide synthetase lenA (4650 aa).

The segment at 227–628 is adenylation 1; the sequence is GSILDTIRAK…DGSVIHVGRK (402 aa). Positions 773–849 constitute a Carrier 1 domain; that stretch reads PPETVLEKAL…KLAQYLRNTE (77 aa). Residue serine 810 is modified to O-(pantetheine 4'-phosphoryl)serine. The interval 890 to 1212 is condensation 1; it reads EDCYPCTALQ…CDFQSQLIFQ (323 aa). The segment at 1288-1622 is adenylation 2; sequence ELELNAQKEP…RKIRPGYLGR (335 aa). A Carrier 2 domain is found at 1745 to 1822; that stretch reads PPVSAAEKKW…EIAALSETRD (78 aa). Serine 1782 carries the post-translational modification O-(pantetheine 4'-phosphoryl)serine. The condensation 2 stretch occupies residues 1850 to 2110; sequence ATNLIAATVH…GEKTRPGGGA (261 aa). The tract at residues 2183-2511 is adenylation 3; that stretch reads RCVHDLVHDA…RTGDLIKLRG (329 aa). Positions 2630–2708 constitute a Carrier 3 domain; that stretch reads APQNRLQHDI…EADVGLDHAS (79 aa). At serine 2667 the chain carries O-(pantetheine 4'-phosphoryl)serine. Positions 2722–2998 are epimerase; sequence ESMARALAVI…KDARRRSPAN (277 aa). The tract at residues 3128–3565 is condensation 3; it reads VQDVYPCTPI…VDDSQRQQIL (438 aa). An adenylation 4 region spans residues 3578–3980; sequence CVHHIIHQRC…FVGRKDNQIK (403 aa). A Carrier 4 domain is found at 4114-4190; sequence TPSTPLEAQL…QLAAVLEEGA (77 aa). At serine 4151 the chain carries O-(pantetheine 4'-phosphoryl)serine. The segment at 4249–4648 is condensation 4; that stretch reads HMVLTFSQPV…TTTPEKLVAE (400 aa).

It belongs to the NRP synthetase family. Requires pantetheine 4'-phosphate as cofactor.

Its pathway is alkaloid biosynthesis. Nonribosomal peptide synthetase; part of the gene cluster that mediates the biosynthesis of the ergot alkaloids lentopeptins A and B. Within the pathway, lenA catalyzes the biosynthesis of the Ala-Val-Ala peptide chain, including a cinnamic acid moiety as the starting unit. The release of the peptide from the enzyme is accomplished via a cyclization reaction catalyzed by the terminal condensation-like (Ct) domain of lenA to form the N-acyldiketopiperazine intermediate. The reaction appears to proceed through a nucleophilic attack on the carbonyl carbon by a lone electron pair of the valine amide nitrogen. The phenylalanine ammonia-lyase lenB provides the starter unit for the synthesis of the N-acyldiketopiperazine intermediate by the NRPS lenA, while the cytochrome P450 monooxygenase lenC is involved in the post-NRPS oxidative modification steps to form lentopeptins A and B. The chain is Nonribosomal peptide synthetase lenA from Aspergillus lentulus.